The chain runs to 194 residues: Probable molybdenum cofactor guanylyltransferase (194 aa).

GTP-binding positions include 8–10, lysine 20, and aspartate 99; that span reads LAG. Aspartate 99 is a Mg(2+) binding site.

It belongs to the MobA family. The cofactor is Mg(2+).

It localises to the cytoplasm. It carries out the reaction Mo-molybdopterin + GTP + H(+) = Mo-molybdopterin guanine dinucleotide + diphosphate. In terms of biological role, transfers a GMP moiety from GTP to Mo-molybdopterin (Mo-MPT) cofactor (Moco or molybdenum cofactor) to form Mo-molybdopterin guanine dinucleotide (Mo-MGD) cofactor. This chain is Probable molybdenum cofactor guanylyltransferase, found in Synechococcus elongatus (strain ATCC 33912 / PCC 7942 / FACHB-805) (Anacystis nidulans R2).